The chain runs to 452 residues: Adenylosuccinate synthetase 2 (452 aa).

GTP is bound by residues 19-25 (GDEGKAR) and 47-49 (GHT). Asp20 functions as the Proton acceptor in the catalytic mechanism. Asp20 and Gly47 together coordinate Mg(2+). Residues 20-23 (DEGK), 45-48 (NAGH), Thr131, Arg145, Gln223, Thr238, and Arg338 each bind IMP. The Proton donor role is filled by His48. 334–340 (TGTGRPR) contacts substrate. Residues Arg340, 366 to 368 (KCD), and 437 to 439 (GLG) each bind GTP.

It belongs to the adenylosuccinate synthetase family. As to quaternary structure, homodimer. Mg(2+) is required as a cofactor.

The protein localises to the cytoplasm. It carries out the reaction IMP + L-aspartate + GTP = N(6)-(1,2-dicarboxyethyl)-AMP + GDP + phosphate + 2 H(+). The protein operates within purine metabolism; AMP biosynthesis via de novo pathway; AMP from IMP: step 1/2. Functionally, plays an important role in the de novo pathway of purine nucleotide biosynthesis. Catalyzes the first committed step in the biosynthesis of AMP from IMP. This Cupriavidus pinatubonensis (strain JMP 134 / LMG 1197) (Cupriavidus necator (strain JMP 134)) protein is Adenylosuccinate synthetase 2.